The sequence spans 360 residues: Phospho-N-acetylmuramoyl-pentapeptide-transferase (360 aa).

The next 10 membrane-spanning stretches (helical) occupy residues 25 to 45 (RGILGVLTALSLALWLGPWMI), 73 to 93 (TMGGALILSAIAISTLLWADL), 97 to 117 (YVWVVLIVTLAFGAIGWVDDY), 134 to 154 (YFWQSVFGLAAAIFLYKTAPT), 168 to 188 (LAIPLGAGFIVLTYFVIVGSS), 199 to 219 (GLAIMPTVMVGGALGIFCYLS), 236 to 256 (AGELIVFCGALIGAGLGFLWF), 263 to 283 (VFMGDVGALALGAALGTIAVI), 288 to 308 (VVLFIMGGVFVMETLSVVIQV), and 338 to 358 (VIVRFWIITVILVLIGLATLK).

This sequence belongs to the glycosyltransferase 4 family. MraY subfamily. Requires Mg(2+) as cofactor.

It is found in the cell inner membrane. It carries out the reaction UDP-N-acetyl-alpha-D-muramoyl-L-alanyl-gamma-D-glutamyl-meso-2,6-diaminopimeloyl-D-alanyl-D-alanine + di-trans,octa-cis-undecaprenyl phosphate = di-trans,octa-cis-undecaprenyl diphospho-N-acetyl-alpha-D-muramoyl-L-alanyl-D-glutamyl-meso-2,6-diaminopimeloyl-D-alanyl-D-alanine + UMP. Its pathway is cell wall biogenesis; peptidoglycan biosynthesis. Its function is as follows. Catalyzes the initial step of the lipid cycle reactions in the biosynthesis of the cell wall peptidoglycan: transfers peptidoglycan precursor phospho-MurNAc-pentapeptide from UDP-MurNAc-pentapeptide onto the lipid carrier undecaprenyl phosphate, yielding undecaprenyl-pyrophosphoryl-MurNAc-pentapeptide, known as lipid I. This is Phospho-N-acetylmuramoyl-pentapeptide-transferase from Pseudomonas entomophila (strain L48).